The primary structure comprises 369 residues: Lipoyl synthase, mitochondrial (369 aa).

Residues 1–32 (MLTKGVRALAWSPRRYITLDAEAAKPVVAKRR) constitute a mitochondrion transit peptide. [4Fe-4S] cluster contacts are provided by Cys-106, Cys-111, Cys-117, Cys-136, Cys-140, Cys-143, and Ser-351. The region spanning 121–340 (NKGSATATIM…KEKALELGFL (220 aa)) is the Radical SAM core domain.

It belongs to the radical SAM superfamily. Lipoyl synthase family. Requires [4Fe-4S] cluster as cofactor.

The protein localises to the mitochondrion. The enzyme catalyses [[Fe-S] cluster scaffold protein carrying a second [4Fe-4S](2+) cluster] + N(6)-octanoyl-L-lysyl-[protein] + 2 oxidized [2Fe-2S]-[ferredoxin] + 2 S-adenosyl-L-methionine + 4 H(+) = [[Fe-S] cluster scaffold protein] + N(6)-[(R)-dihydrolipoyl]-L-lysyl-[protein] + 4 Fe(3+) + 2 hydrogen sulfide + 2 5'-deoxyadenosine + 2 L-methionine + 2 reduced [2Fe-2S]-[ferredoxin]. Its pathway is protein modification; protein lipoylation via endogenous pathway; protein N(6)-(lipoyl)lysine from octanoyl-[acyl-carrier-protein]: step 2/2. Its function is as follows. Catalyzes the radical-mediated insertion of two sulfur atoms into the C-6 and C-8 positions of the octanoyl moiety bound to the lipoyl domains of lipoate-dependent enzymes, thereby converting the octanoylated domains into lipoylated derivatives. This Eremothecium gossypii (strain ATCC 10895 / CBS 109.51 / FGSC 9923 / NRRL Y-1056) (Yeast) protein is Lipoyl synthase, mitochondrial.